The sequence spans 231 residues: uncharacterized protein (231 aa).

The next 3 membrane-spanning stretches (helical) occupy residues 6–26 (IKLI…YKYI), 39–59 (NIVS…STFS), and 66–86 (FCFQ…GYAF).

The protein localises to the cell membrane. This is an uncharacterized protein from Rickettsia prowazekii (strain Madrid E).